The sequence spans 445 residues: Histidinol dehydrogenase (445 aa).

Residues Y144, Q205, and N228 each coordinate NAD(+). Substrate-binding residues include S251, Q273, and H276. 2 residues coordinate Zn(2+): Q273 and H276. Catalysis depends on proton acceptor residues E341 and H342. Substrate is bound by residues H342, D375, E429, and H434. Zn(2+) is bound at residue D375. H434 serves as a coordination point for Zn(2+).

It belongs to the histidinol dehydrogenase family. Requires Zn(2+) as cofactor.

The enzyme catalyses L-histidinol + 2 NAD(+) + H2O = L-histidine + 2 NADH + 3 H(+). It participates in amino-acid biosynthesis; L-histidine biosynthesis; L-histidine from 5-phospho-alpha-D-ribose 1-diphosphate: step 9/9. Catalyzes the sequential NAD-dependent oxidations of L-histidinol to L-histidinaldehyde and then to L-histidine. The chain is Histidinol dehydrogenase from Cupriavidus pinatubonensis (strain JMP 134 / LMG 1197) (Cupriavidus necator (strain JMP 134)).